A 524-amino-acid polypeptide reads, in one-letter code: RNA-splicing ligase RtcB homolog 2 (524 aa).

Mn(2+) is bound by residues aspartate 141, cysteine 144, histidine 249, histidine 281, and histidine 372. 248–252 (NHYLE) is a GMP binding site. Residues 372-373 (HN), 421-424 (GGSM), serine 428, 447-450 (HGAG), and lysine 523 contribute to the GMP site. The GMP-histidine intermediate role is filled by histidine 447.

It belongs to the RtcB family. Catalytic component of the tRNA-splicing ligase complex. The cofactor is Mn(2+).

The catalysed reaction is a 3'-end 3'-phospho-ribonucleotide-RNA + a 5'-end dephospho-ribonucleoside-RNA + GTP = a ribonucleotidyl-ribonucleotide-RNA + GMP + diphosphate. The enzyme catalyses a 3'-end 2',3'-cyclophospho-ribonucleotide-RNA + a 5'-end dephospho-ribonucleoside-RNA + GTP + H2O = a ribonucleotidyl-ribonucleotide-RNA + GMP + diphosphate + H(+). Functionally, catalytic subunit of the tRNA-splicing ligase complex that acts by directly joining spliced tRNA halves to mature-sized tRNAs by incorporating the precursor-derived splice junction phosphate into the mature tRNA as a canonical 3',5'-phosphodiester. May act as an RNA ligase with broad substrate specificity, and may function toward other RNAs. This Entamoeba dispar (strain ATCC PRA-260 / SAW760) protein is RNA-splicing ligase RtcB homolog 2.